The chain runs to 204 residues: Phosphoribosyl-dephospho-CoA transferase (204 aa).

Catalysis depends on residues aspartate 129 and aspartate 131.

The protein belongs to the MdcG family.

It carries out the reaction apo-[malonate decarboxylase ACP] + 2'-(5''-triphospho-alpha-D-ribosyl)-3'-dephospho-CoA = holo-[malonate decarboxylase ACP] + diphosphate. Functionally, transfers 2'-(5-triphosphoribosyl)-3'-dephosphocoenzyme-A to the apo-[acyl-carrier-protein] of the malonate decarboxylase to yield holo-[acyl-carrier-protein]. The polypeptide is Phosphoribosyl-dephospho-CoA transferase (Pseudomonas putida (Arthrobacter siderocapsulatus)).